Consider the following 252-residue polypeptide: Pantothenate synthetase (252 aa).

29 to 36 serves as a coordination point for ATP; that stretch reads MGNLHAGH. The Proton donor role is filled by histidine 36. A (R)-pantoate-binding site is contributed by glutamine 60. Glutamine 60 serves as a coordination point for beta-alanine. Residue 146 to 149 participates in ATP binding; the sequence is GEKD. Glutamine 152 lines the (R)-pantoate pocket. ATP-binding positions include valine 175 and 183–186; that span reads CSSR.

It belongs to the pantothenate synthetase family. Homodimer.

It localises to the cytoplasm. The catalysed reaction is (R)-pantoate + beta-alanine + ATP = (R)-pantothenate + AMP + diphosphate + H(+). The protein operates within cofactor biosynthesis; (R)-pantothenate biosynthesis; (R)-pantothenate from (R)-pantoate and beta-alanine: step 1/1. Functionally, catalyzes the condensation of pantoate with beta-alanine in an ATP-dependent reaction via a pantoyl-adenylate intermediate. The chain is Pantothenate synthetase from Legionella pneumophila (strain Corby).